The following is a 743-amino-acid chain: 1,4-alpha-glucan branching enzyme GlgB (743 aa).

The active-site Nucleophile is the Asp416. The active-site Proton donor is Glu469.

This sequence belongs to the glycosyl hydrolase 13 family. GlgB subfamily. Monomer.

It catalyses the reaction Transfers a segment of a (1-&gt;4)-alpha-D-glucan chain to a primary hydroxy group in a similar glucan chain.. It functions in the pathway glycan biosynthesis; glycogen biosynthesis. Functionally, catalyzes the formation of the alpha-1,6-glucosidic linkages in glycogen by scission of a 1,4-alpha-linked oligosaccharide from growing alpha-1,4-glucan chains and the subsequent attachment of the oligosaccharide to the alpha-1,6 position. In Shewanella baltica (strain OS195), this protein is 1,4-alpha-glucan branching enzyme GlgB.